Consider the following 409-residue polypeptide: S-adenosylmethionine synthase (409 aa).

Residue His15 participates in ATP binding. Residue Asp17 participates in Mg(2+) binding. Residue Glu43 participates in K(+) binding. L-methionine is bound by residues Glu56 and Gln100. The tract at residues 100–110 (QSSDIAQGVNE) is flexible loop. Residues 171 to 173 (DGK), 248 to 249 (KF), Asp257, 263 to 264 (RK), Ala280, and Lys284 contribute to the ATP site. Asp257 is an L-methionine binding site. Residue Lys288 coordinates L-methionine.

The protein belongs to the AdoMet synthase family. In terms of assembly, homotetramer; dimer of dimers. Mg(2+) is required as a cofactor. Requires K(+) as cofactor.

The protein resides in the cytoplasm. The enzyme catalyses L-methionine + ATP + H2O = S-adenosyl-L-methionine + phosphate + diphosphate. Its pathway is amino-acid biosynthesis; S-adenosyl-L-methionine biosynthesis; S-adenosyl-L-methionine from L-methionine: step 1/1. Catalyzes the formation of S-adenosylmethionine (AdoMet) from methionine and ATP. The overall synthetic reaction is composed of two sequential steps, AdoMet formation and the subsequent tripolyphosphate hydrolysis which occurs prior to release of AdoMet from the enzyme. In Prochlorococcus marinus (strain NATL1A), this protein is S-adenosylmethionine synthase.